The chain runs to 276 residues: MAIRSYRTYTPSTRNRPISSYDGRVRSNPQKKLTSGQHRCGKGRNSRGIITARHRGGGHKRLYRQIDFQRNEKYIFGEIVTIEYDPNRSAYICLVHYGDGEKKYILHPRGVIIGDTITSGPRAPISIGNALPLTDVPLGTAIHSIEITLGKGGQLARAAGAVAELIAKEGRSTTLRLPSGEIRLISENCSATIGQVGNVNANNGTLGKAGSKRWLGKRPRVRGVVMNPVDHPHGGGEGRTPIGRKKPVTPWGYAALGRKSRKNNKYSDASILRRRK.

Disordered stretches follow at residues 1–51 and 224–276; these read MAIR…GIIT and VVMN…RRRK. Polar residues-rich tracts occupy residues 7 to 18 and 27 to 37; these read RTYTPSTRNRPI and SNPQKKLTSGQ.

It belongs to the universal ribosomal protein uL2 family. In terms of assembly, part of the 50S ribosomal subunit.

It localises to the plastid. The protein localises to the chloroplast. The sequence is that of Large ribosomal subunit protein uL2c (rpl2) from Cycas taitungensis (Prince sago).